The primary structure comprises 44 residues: MQDLKTYLSTAPVLAILCVSFLAALLIEINRFFPDALFLSLSFS.

The chain crosses the membrane as a helical span at residues tyrosine 7–isoleucine 27.

Belongs to the PsaJ family.

It is found in the plastid. The protein resides in the chloroplast thylakoid membrane. Its function is as follows. May help in the organization of the PsaE and PsaF subunits. The protein is Photosystem I reaction center subunit IX of Pinus thunbergii (Japanese black pine).